Consider the following 496-residue polypeptide: Cobyric acid synthase (496 aa).

One can recognise a GATase cobBQ-type domain in the interval D252–Y442. C333 acts as the Nucleophile in catalysis. H434 is a catalytic residue.

It belongs to the CobB/CobQ family. CobQ subfamily.

The protein operates within cofactor biosynthesis; adenosylcobalamin biosynthesis. In terms of biological role, catalyzes amidations at positions B, D, E, and G on adenosylcobyrinic A,C-diamide. NH(2) groups are provided by glutamine, and one molecule of ATP is hydrogenolyzed for each amidation. In Desulforudis audaxviator (strain MP104C), this protein is Cobyric acid synthase.